Consider the following 141-residue polypeptide: Large-conductance mechanosensitive channel (141 aa).

Transmembrane regions (helical) follow at residues 14–34 (VVDL…VNSL), 38–58 (VIMP…YYIP), and 82–102 (GQFL…FMVI).

The protein belongs to the MscL family. Homopentamer.

The protein resides in the cell inner membrane. Channel that opens in response to stretch forces in the membrane lipid bilayer. May participate in the regulation of osmotic pressure changes within the cell. The protein is Large-conductance mechanosensitive channel of Methylorubrum extorquens (strain CM4 / NCIMB 13688) (Methylobacterium extorquens).